A 576-amino-acid polypeptide reads, in one-letter code: Nuclear/nucleolar GTPase 2 (576 aa).

2 disordered regions span residues methionine 1–tyrosine 61 and glutamine 166–aspartate 186. Over residues histidine 16–serine 34 the composition is skewed to basic and acidic residues. Residues lysine 42–alanine 52 show a composition bias toward basic residues. The 162-residue stretch at tryptophan 206–glutamine 367 folds into the CP-type G domain. A DARXP motif motif is present at residues aspartate 224 to proline 228. Positions asparagine 254–aspartate 257 are G4. Asparagine 254 to aspartate 257 contributes to the GTP binding site. Residues serine 283–asparagine 285 are G5. The G1 stretch occupies residues glycine 316–serine 323. Asparagine 319–serine 324 provides a ligand contact to GTP. Positions glycine 342–valine 346 are G2. The segment at aspartate 360–glycine 363 is G3. Glycine 363 contacts GTP. Residues threonine 502–glutamate 576 form a disordered region. Residues proline 509–threonine 530 are compositionally biased toward basic and acidic residues. The segment covering glutamate 531–glutamate 576 has biased composition (acidic residues).

It belongs to the TRAFAC class YlqF/YawG GTPase family. RsgA subfamily. Interacts with the 60S ribosomal proteins RPL10AA, RPL10AB and RPL10AC. As to expression, ubiquitous, with higher levels in meristematic regions.

Its subcellular location is the nucleus. The protein resides in the nucleolus. The GTPase activity is stimulated in the presence of the 60S ribosomal subunit. GTPase involved in pre-60S ribosomal subunit maturation. This Arabidopsis thaliana (Mouse-ear cress) protein is Nuclear/nucleolar GTPase 2.